The following is a 166-amino-acid chain: MTEPSSRRSGYARLLDRAIRILAMRDHSEQELRRKLAAPVMSKNGPEALDVTPEELEQVVAWCIENRYLDDHRFVGQFIASRSRKGYGPARIRQELSQKGIARQDVEQAMRECDIDWVSLAREQAQRKYGEPLPSAFTEKVKVQRFLLYRGYLMEDIQEIWRNFAD.

This sequence belongs to the RecX family.

It is found in the cytoplasm. Modulates RecA activity. The polypeptide is Regulatory protein RecX (Klebsiella pneumoniae (strain 342)).